Here is a 201-residue protein sequence, read N- to C-terminus: Potassium-transporting ATPase KdpC subunit (201 aa).

A helical transmembrane segment spans residues 9-29 (ILVMLALTLITGLLYPLAMTV). Polar residues-rich tracts occupy residues 73–84 (TTAADPNDSTKT) and 91–101 (AANSSGSNLGP). The disordered stretch occupies residues 73-103 (TTAADPNDSTKTVPAPYNAANSSGSNLGPTS).

The protein belongs to the KdpC family. In terms of assembly, the system is composed of three essential subunits: KdpA, KdpB and KdpC.

It is found in the cell inner membrane. Its function is as follows. Part of the high-affinity ATP-driven potassium transport (or Kdp) system, which catalyzes the hydrolysis of ATP coupled with the electrogenic transport of potassium into the cytoplasm. This subunit acts as a catalytic chaperone that increases the ATP-binding affinity of the ATP-hydrolyzing subunit KdpB by the formation of a transient KdpB/KdpC/ATP ternary complex. The sequence is that of Potassium-transporting ATPase KdpC subunit from Bradyrhizobium sp. (strain BTAi1 / ATCC BAA-1182).